A 37-amino-acid chain; its full sequence is Large ribosomal subunit protein bL36 (37 aa).

Belongs to the bacterial ribosomal protein bL36 family.

The chain is Large ribosomal subunit protein bL36 from Persephonella marina (strain DSM 14350 / EX-H1).